The following is a 431-amino-acid chain: Serine hydroxymethyltransferase (431 aa).

Residues Leu128 and 132–134 contribute to the (6S)-5,6,7,8-tetrahydrofolate site; that span reads GHL. Lys237 is modified (N6-(pyridoxal phosphate)lysine).

Belongs to the SHMT family. As to quaternary structure, homodimer. Pyridoxal 5'-phosphate is required as a cofactor.

It is found in the cytoplasm. The catalysed reaction is (6R)-5,10-methylene-5,6,7,8-tetrahydrofolate + glycine + H2O = (6S)-5,6,7,8-tetrahydrofolate + L-serine. Its pathway is one-carbon metabolism; tetrahydrofolate interconversion. The protein operates within amino-acid biosynthesis; glycine biosynthesis; glycine from L-serine: step 1/1. Its function is as follows. Catalyzes the reversible interconversion of serine and glycine with tetrahydrofolate (THF) serving as the one-carbon carrier. This reaction serves as the major source of one-carbon groups required for the biosynthesis of purines, thymidylate, methionine, and other important biomolecules. Also exhibits THF-independent aldolase activity toward beta-hydroxyamino acids, producing glycine and aldehydes, via a retro-aldol mechanism. In Ruegeria pomeroyi (strain ATCC 700808 / DSM 15171 / DSS-3) (Silicibacter pomeroyi), this protein is Serine hydroxymethyltransferase.